Consider the following 480-residue polypeptide: Iron-sulfur cluster assembly SufBD family protein slr0074 (480 aa).

Belongs to the iron-sulfur cluster assembly SufBD family.

The chain is Iron-sulfur cluster assembly SufBD family protein slr0074 from Synechocystis sp. (strain ATCC 27184 / PCC 6803 / Kazusa).